Consider the following 596-residue polypeptide: Arrestin domain-containing protein C31A2.12 (596 aa).

A helical transmembrane segment spans residues 194 to 211 (AYAIGSYIPIHFVLVPLL). 2 disordered regions span residues 363–387 (NLDT…TYAS) and 405–446 (QQQP…VITR). T373 and T374 each carry phosphothreonine. Composition is skewed to polar residues over residues 405–420 (QQQP…SPSN) and 430–446 (SLGS…VITR). Phosphoserine occurs at positions 452, 474, 493, and 497. The tract at residues 493–596 (SRPPSPGIVT…MLPSGFSRRN (104 aa)) is disordered. A phosphothreonine mark is found at T502 and T507. Over residues 504–522 (PQRTSPSFFVSPTESTRQS) the composition is skewed to polar residues. Phosphoserine is present on S514. Residues 531–555 (HSTSSSSGISPSHSSASLAHLSQAS) are compositionally biased toward low complexity.

This sequence belongs to the arrestin family.

The protein localises to the membrane. This Schizosaccharomyces pombe (strain 972 / ATCC 24843) (Fission yeast) protein is Arrestin domain-containing protein C31A2.12.